A 230-amino-acid polypeptide reads, in one-letter code: MTCVNVCFFLFPPCHRNKITEADKSLVDLLIPSLCCSLAVFPSIPLINTHSNLCLFSNFSHSCFLFCTHPDTLPTSLSINPKKLSLSFSFPLSQKRPFPNFLHPFTGSELSLFRCLLLFFFFLLFFLSFSFSFSFLFFLSQIFIVYFSSFPILHFLFFFFLCVCVFLSFLFSLSHLLSLAILFLPLLLRVFSTLSRLPRLFCLCLQKKRRVLIPFAFTSFRKIASLPCVC.

A signal peptide spans 1 to 16; it reads MTCVNVCFFLFPPCHR. Transmembrane regions (helical) follow at residues 27–47, 118–138, 150–170, and 172–191; these read VDLL…IPLI, LFFF…FLFF, FPIL…LSFL, and SLSH…LRVF.

The protein localises to the cytoplasm. It is found in the nucleus membrane. This is an uncharacterized protein from Schizosaccharomyces pombe (strain 972 / ATCC 24843) (Fission yeast).